Consider the following 358-residue polypeptide: Neutral protease 2 homolog MGYG_02351 (358 aa).

Residues 1-17 (MQFVALLAALGAPLALA) form the signal peptide. A propeptide spanning residues 18 to 183 (ASIPAAHNNS…DSPAGVIDKR (166 aa)) is cleaved from the precursor. 2 disulfides stabilise this stretch: C191/C260 and C267/C285. A Zn(2+)-binding site is contributed by H309. E310 is an active-site residue. 2 residues coordinate Zn(2+): H313 and D324.

The protein belongs to the peptidase M35 family. Zn(2+) is required as a cofactor.

The protein localises to the secreted. The enzyme catalyses Preferential cleavage of bonds with hydrophobic residues in P1'. Also 3-Asn-|-Gln-4 and 8-Gly-|-Ser-9 bonds in insulin B chain.. Secreted metalloproteinase that allows assimilation of proteinaceous substrates. Shows high activities on basic nuclear substrates such as histone and protamine. May be involved in virulence. The sequence is that of Neutral protease 2 homolog MGYG_02351 from Arthroderma gypseum (strain ATCC MYA-4604 / CBS 118893) (Microsporum gypseum).